The sequence spans 322 residues: Ferrochelatase (322 aa).

2 residues coordinate Fe cation: histidine 194 and glutamate 275.

The protein belongs to the ferrochelatase family.

Its subcellular location is the cytoplasm. The catalysed reaction is heme b + 2 H(+) = protoporphyrin IX + Fe(2+). Its pathway is porphyrin-containing compound metabolism; protoheme biosynthesis; protoheme from protoporphyrin-IX: step 1/1. Catalyzes the ferrous insertion into protoporphyrin IX. This is Ferrochelatase from Yersinia enterocolitica.